The chain runs to 332 residues: Malate dehydrogenase, cytoplasmic (332 aa).

NAD(+) is bound by residues 16-17 (QI), Asp43, and Gly90. Arg99 is a binding site for oxaloacetate. NAD(+)-binding residues include Gln113 and Asn132. Asn132, Arg163, His188, and Ser243 together coordinate oxaloacetate. The active-site Proton acceptor is His188.

The protein belongs to the LDH/MDH superfamily. MDH type 2 family. Monomer. As to expression, expressed constitutively in roots.

It is found in the cell membrane. It catalyses the reaction (S)-malate + NAD(+) = oxaloacetate + NADH + H(+). In terms of biological role, malate dehydrogenase; catalyzes a reversible NAD-dependent dehydrogenase reaction involved in central metabolism and redox homeostasis. The protein is Malate dehydrogenase, cytoplasmic of Zea mays (Maize).